A 62-amino-acid chain; its full sequence is Potassium channel toxin gamma-KTx 1.1 (62 aa).

The signal sequence occupies residues 1 to 20 (MKVLILIMIIASLMIMGVEM). 4 disulfide bridges follow: cysteine 25–cysteine 43, cysteine 31–cysteine 54, cysteine 40–cysteine 59, and cysteine 44–cysteine 61.

The protein belongs to the ergtoxin family. Gamma-KTx 1 subfamily. After protein storage at -20 Celsius degrees during a couple of months, the Met-55 of a small number of toxins is naturally oxidized. This oxidized form is about three orders of magnitude less efficient (IC(50)=15 uM) than non-oxidized form. Expressed by the venom gland.

Its subcellular location is the secreted. Its function is as follows. Blocks human and rat Kv11.1/KCNH2/ERG1 and Kv11.3/KCNH7/ERG3, as well as rat (but not human) Kv11.2/KCNH6/ERG2 by binding to channel outer vestibule (S5P domain) with a 1:1 stoichiometry. Inhibition data are the following: hERG1 (reversible, IC(50)~7 nM), rERG1 (reversible, Kd=6.8 nM), rERG2 (irreversible, Kd=2.8 nM), hERG3 (irreversible, Kd=4.05 nM) and rERG3 (reversible, Kd=38.1 nM) potassium channels. The toxin potency is not affected by elevating potassium ion concentration from 2 to 98 mM. This toxin only blocks channels in a closed state. At high toxin concentrations, block of Kv11.1/KCNH2/ERG1 macroscopic current is incomplete (93.5%). This suggests a kinetic mechanism model with two different states of toxin-channel binding (T+C=TC*=TC; in the TC* state, the toxin binds the channel but does not occlude the pore, whereas in the TC state the toxin binds and occludes the pore). In this model, incomplete block is explained by the relatively fast dissociation rate from the blocked channel conformation (TC) relative to the rate of conversion of the toxin-channel encounter complex (TC*) to the blocked channel conformation (TC). The sequence is that of Potassium channel toxin gamma-KTx 1.1 from Centruroides noxius (Mexican scorpion).